Reading from the N-terminus, the 249-residue chain is Elsinochromes biosynthesis cluster protein HP3 (249 aa).

An N-linked (GlcNAc...) asparagine glycan is attached at asparagine 106. The helical transmembrane segment at 138–158 threads the bilayer; the sequence is VVFAFMLSAWLVWLITVYAFA.

It is found in the membrane. Part of the gene cluster that mediates the biosynthesis of elsinochromes, pigments consisting of at least four interconvertible tautomers (A, B, C and D) that have a core phenolic quinone to which various side chains are attached and which play an important role in fungal pathogenesis. The non-reducing polyketide synthase PKS1 was proposed to iteratively catalyze decarboxylation between acetyl-CoA and malonyl-CoA subunits for polyketide chain elongation. The released polyketide undergoes cyclization to form an aromatic ring, and proceeds via serial modification steps to produce the heptaketide back- bone of elsinochrome. As elsinochrome has a symmetrical structure, two identical heptaketides are fused to form a core 1,2-dihydrobenzo-perylene ring structure, which can then be successively modified to produce the various derivatives of elsinochrome. Some of these reactions may be cooperatively carried out, at least in part, by the products of RDT1, OXR1 and PKS1. PRF1, embedded within the elsinochrome cluster possibly functions to stabilize some of the biosynthetic enzymes required for elsinochrome production. As prefoldin is a hexamer containing 2 a and 4 b subunits, additional prefoldin subunits, whose coding genes may not immediately link to the elsinochrome biosynthetic gene cluster, are required to fulfill the chaperone function. In addition, no methyltransferase-coding gene exists within the biosynthetic gene cluster, even though elsinochrome has four methyl groups at positions C3, C7, C8 and C12. Apparently, the identified gene cluster does not contain the entire entourage of genes responsible for elsinochrome biosynthesis. Once elsinochrome is synthesized, it must be exported outside the fungal cells, which is probably accomplished by the ECT1 transporter, to avoid toxicity. This is Elsinochromes biosynthesis cluster protein HP3 from Elsinoe fawcettii (Citrus scab fungus).